The sequence spans 448 residues: Velvet complex subunit 2 (448 aa).

Disordered stretches follow at residues 1–153 (MNSA…SKIE) and 224–306 (EPGT…NGYG). Positions 15 to 34 (PGPAYSSSAPPPIHTYQQHQ) are enriched in low complexity. 2 stretches are compositionally biased toward pro residues: residues 35–44 (HPPPPLPPPS) and 52–61 (PPLPPPPSAP). The span at 96–107 (APYQQSQPSQYP) shows a compositional bias: low complexity. The span at 116 to 132 (VPPPSQHDEPPPPPSSG) shows a compositional bias: pro residues. Positions 155-431 (GSGWKYSLDV…ANQGIKIPIR (277 aa)) constitute a Velvet domain. Over residues 260-292 (QQSYGPAPSYPPSSSYGPPQQYYPRHSGYSAEP) the composition is skewed to low complexity.

It belongs to the velvet family. VelB subfamily. In terms of assembly, component of the heterotrimeric velvet complex composed of LAE1, VE1 and VELB; VE1 acting as a bridging protein between LAE1 and VEL2. Interacts with VE1. Forms a heterodimeric complex with VOS1; the formation of the VELB-VOS1 complex is light-dependent.

It localises to the nucleus. The protein localises to the cytoplasm. Functionally, component of the velvet transcription factor complex that controls sexual/asexual developmental ratio in response to light, promoting sexual development in the darkness while stimulating asexual sporulation under illumination. The velvet complex acts as a global regulator for secondary metabolite gene expression. Component of the VELB-VOS1 heterodimeric complex that plays a dual role in activating genes associated with spore maturation and repressing certain development-associated genes. The VELB-VOS1 complex binds DNA through the DNA-binding domain of VOS1 that recognizes an 11-nucleotide consensus sequence 5'-CTGGCCGCGGC-3' consisting of two motifs in the promoters of key developmental regulatory genes. Controls the expression of the fumonisins gene cluster. Involved in cell wall integrity, cell surface hydrophobicity, hyphal polarity and conidiation pattern. Involved in oxidative stress resistance by positively regulating the transcription of the catalase-encoding gene CAT2. The polypeptide is Velvet complex subunit 2 (Gibberella moniliformis (strain M3125 / FGSC 7600) (Maize ear and stalk rot fungus)).